A 391-amino-acid chain; its full sequence is Phosphopentomutase (391 aa).

Asp14 contacts Mn(2+). The interval 61-88 is disordered; sequence IQGVPPDPAPTAFHGRMAERSEGKDTTT. The segment covering 76–87 has biased composition (basic and acidic residues); it reads RMAERSEGKDTT. The Mn(2+) site is built by Asp286, His291, Asp327, His328, and His339.

This sequence belongs to the phosphopentomutase family. The cofactor is Mn(2+).

The protein resides in the cytoplasm. It catalyses the reaction 2-deoxy-alpha-D-ribose 1-phosphate = 2-deoxy-D-ribose 5-phosphate. It carries out the reaction alpha-D-ribose 1-phosphate = D-ribose 5-phosphate. Its pathway is carbohydrate degradation; 2-deoxy-D-ribose 1-phosphate degradation; D-glyceraldehyde 3-phosphate and acetaldehyde from 2-deoxy-alpha-D-ribose 1-phosphate: step 1/2. Functionally, isomerase that catalyzes the conversion of deoxy-ribose 1-phosphate (dRib-1-P) and ribose 1-phosphate (Rib-1-P) to deoxy-ribose 5-phosphate (dRib-5-P) and ribose 5-phosphate (Rib-5-P), respectively. In Anaeromyxobacter dehalogenans (strain 2CP-C), this protein is Phosphopentomutase.